We begin with the raw amino-acid sequence, 338 residues long: RAB6-interacting golgin (338 aa).

Composition is skewed to basic and acidic residues over residues 1-14 (MTEK…DEIL) and 46-59 (RMPD…DQLR). 2 disordered regions span residues 1–109 (MTEK…LNLD) and 127–188 (ARDK…SPFK). Composition is skewed to low complexity over residues 60–73 (KQQQ…IQKP) and 153–167 (SGGD…DDGS). A coiled-coil region spans residues 192-244 (LKDFEQHRRMIEEQNKQKKQMLYQAIEQHTQKTAAESRKIEEIRHELSKLESD). The tract at residues 244–260 (DLAVDVALLRKQIDNAC) is essential for Sas-6 binding. Positions 246–286 (AVDVALLRKQIDNACIHFANVEKQYVKIEAQFLRAKIELHN) are necessary for localization to the centrosome. The interval 246–323 (AVDVALLRKQ…TELMQKVGLS (78 aa)) is necessary for localization to the Golgi. A necessary for interaction with Sas-6 and essential for homodimerization region spans residues 260 to 286 (CIHFANVEKQYVKIEAQFLRAKIELHN).

The protein belongs to the GORAB family. Homodimer (via C-terminus); dimerization appears to be required for its trans-Golgi localization but not for its function and centriolar localization. Interacts (via C-terminus) with Rab6; binds Rab6 as a homodimer, this interaction seems to be required for trans-Golgi localization. Interacts (via C-terminus) with Sas-6; binds as a monomer to a Sas-6 homodimer.

The protein resides in the cytoplasm. It is found in the cytoskeleton. The protein localises to the microtubule organizing center. Its subcellular location is the centrosome. It localises to the centriole. The protein resides in the golgi apparatus. It is found in the trans-Golgi network. Required for centriole duplication likely through its interaction with Sas-6. During embryogenesis, maternally provided protein is required for centrosome duplication and nuclear division cycles of the syncytial embryos. In femoral chordotonal organs, required for sensory cilia structural integrity and functionality necessary for motor coordination. In male germline, has a role in cytokinesis which seems dependent on its localization to the Golgi. This chain is RAB6-interacting golgin, found in Drosophila melanogaster (Fruit fly).